The following is a 184-amino-acid chain: Nutrient stress-induced DNA-binding protein (184 aa).

This sequence belongs to the Dps family. Hexamer.

Involved in protection of chromosomal DNA from damage under nutrient-limited and oxidative stress conditions. Binds heme. The polypeptide is Nutrient stress-induced DNA-binding protein (dpsA) (Nostoc sp. (strain PCC 7120 / SAG 25.82 / UTEX 2576)).